Consider the following 24-residue polypeptide: Osteocalcin (24 aa).

The Gla domain occupies 1–24 (REVCELNPDCDELADHIGFQEAYR). Glutamate 2, glutamate 5, and aspartate 11 together coordinate Ca(2+). 4-carboxyglutamate occurs at positions 2 and 5. The cysteines at positions 4 and 10 are disulfide-linked.

The protein belongs to the osteocalcin/matrix Gla protein family. Post-translationally, gamma-carboxyglutamate residues are formed by vitamin K dependent carboxylation by GGCX. These residues are essential for the binding of calcium. Decarboxylation promotes the hormone activity.

The protein localises to the secreted. Functionally, the carboxylated form is one of the main organic components of the bone matrix, which constitutes 1-2% of the total bone protein: it acts as a negative regulator of bone formation and is required to limit bone formation without impairing bone resorption or mineralization. The carboxylated form binds strongly to apatite and calcium. The uncarboxylated form acts as a hormone secreted by osteoblasts, which regulates different cellular processes, such as energy metabolism, male fertility and brain development. Regulates of energy metabolism by acting as a hormone favoring pancreatic beta-cell proliferation, insulin secretion and sensitivity and energy expenditure. Uncarboxylated osteocalcin hormone also promotes testosterone production in the testes: acts as a ligand for G protein-coupled receptor GPRC6A at the surface of Leydig cells, initiating a signaling response that promotes the expression of enzymes required for testosterone synthesis in a CREB-dependent manner. Also acts as a regulator of brain development: osteocalcin hormone crosses the blood-brain barrier and acts as a ligand for GPR158 on neurons, initiating a signaling response that prevents neuronal apoptosis in the hippocampus, favors the synthesis of all monoamine neurotransmitters and inhibits that of gamma-aminobutyric acid (GABA). Osteocalcin also crosses the placenta during pregnancy and maternal osteocalcin is required for fetal brain development. This Homo sapiens neanderthalensis (Neanderthal) protein is Osteocalcin.